The following is a 143-amino-acid chain: MFMGEYRHTIDAKGRLIVPAKFREQLGDSFVVTRGMDGCLFGYTQEEWNILETKLQKLPLTKKDARAFVRFFYSAATECEIDKQGRINIPKSLRTHAALQKKCVVVGVSNRFEIWSEDRWEAFADEAEENFDDIAENMIDFDL.

SpoVT-AbrB domains are found at residues 5-47 and 76-119; these read EYRH…TQEE and ATEC…SEDR.

This sequence belongs to the MraZ family. In terms of assembly, forms oligomers.

Its subcellular location is the cytoplasm. The protein localises to the nucleoid. This Ligilactobacillus salivarius (strain UCC118) (Lactobacillus salivarius) protein is Transcriptional regulator MraZ.